Here is a 217-residue protein sequence, read N- to C-terminus: Large ribosomal subunit protein uL3 (217 aa).

Positions 131-155 (FSSSRASHGNSRSHNVPGSIGMAQD) are disordered. The span at 132 to 145 (SSSRASHGNSRSHN) shows a compositional bias: low complexity. Position 154 is an N5-methylglutamine (glutamine 154).

Belongs to the universal ribosomal protein uL3 family. In terms of assembly, part of the 50S ribosomal subunit. Forms a cluster with proteins L14 and L19. Post-translationally, methylated by PrmB.

In terms of biological role, one of the primary rRNA binding proteins, it binds directly near the 3'-end of the 23S rRNA, where it nucleates assembly of the 50S subunit. The polypeptide is Large ribosomal subunit protein uL3 (Nitrosomonas eutropha (strain DSM 101675 / C91 / Nm57)).